A 466-amino-acid chain; its full sequence is Cytochrome P450 85A1 (466 aa).

Residues 1–21 (MVLAVLIGVLVGIVLVSSLLL) traverse the membrane as a helical segment. Residue Cys-416 coordinates heme.

This sequence belongs to the cytochrome P450 family. Heme is required as a cofactor.

Its subcellular location is the membrane. It catalyses the reaction 6-deoxoteasterone + reduced [NADPH--hemoprotein reductase] + O2 = 6alpha-hydroxyteasterone + oxidized [NADPH--hemoprotein reductase] + H2O + H(+). The catalysed reaction is 6alpha-hydroxytyphasterol + reduced [NADPH--hemoprotein reductase] + O2 = teasterone + oxidized [NADPH--hemoprotein reductase] + 2 H2O + H(+). The enzyme catalyses 3-dehydro-6-deoxoteasterone + reduced [NADPH--hemoprotein reductase] + O2 = 3-dehydro-6alpha-hydroxyteasterone + oxidized [NADPH--hemoprotein reductase] + H2O + H(+). It carries out the reaction 3-dehydro-6alpha-hydroxyteasterone + reduced [NADPH--hemoprotein reductase] + O2 = 3-dehydroteasterone + oxidized [NADPH--hemoprotein reductase] + 2 H2O + H(+). It catalyses the reaction 6-deoxotyphasterol + reduced [NADPH--hemoprotein reductase] + O2 = 6alpha-hydroxytyphasterol + oxidized [NADPH--hemoprotein reductase] + H2O + H(+). The catalysed reaction is 6alpha-hydroxytyphasterol + reduced [NADPH--hemoprotein reductase] + O2 = typhasterol + oxidized [NADPH--hemoprotein reductase] + 2 H2O + H(+). The enzyme catalyses 6-deoxocastasterone + reduced [NADPH--hemoprotein reductase] + O2 = 6alpha-hydroxycastasterone + oxidized [NADPH--hemoprotein reductase] + H2O + H(+). It carries out the reaction 6alpha-hydroxycastasterone + reduced [NADPH--hemoprotein reductase] + O2 = castasterone + oxidized [NADPH--hemoprotein reductase] + 2 H2O + H(+). It catalyses the reaction 3-dehydro-6-deoxoteasterone + 2 reduced [NADPH--hemoprotein reductase] + 2 O2 = 3-dehydroteasterone + 2 oxidized [NADPH--hemoprotein reductase] + 3 H2O + 2 H(+). The catalysed reaction is 6-deoxocastasterone + 2 reduced [NADPH--hemoprotein reductase] + 2 O2 = castasterone + 2 oxidized [NADPH--hemoprotein reductase] + 3 H2O + 2 H(+). The enzyme catalyses 6-deoxoteasterone + 2 reduced [NADPH--hemoprotein reductase] + 2 O2 = teasterone + 2 oxidized [NADPH--hemoprotein reductase] + 3 H2O + 2 H(+). It carries out the reaction 6-deoxotyphasterol + 2 reduced [NADPH--hemoprotein reductase] + 2 O2 = typhasterol + 2 oxidized [NADPH--hemoprotein reductase] + 3 H2O + 2 H(+). It functions in the pathway plant hormone biosynthesis; brassinosteroid biosynthesis. In terms of biological role, involved in reduction steps of the biosynthesis of plant campesterol-derivative steroids, ending to castasterone (CS) but missing brassinolide (BL). Catalyzes the C6-oxidation step in brassinosteroids biosynthesis; the conversion of 6-deoxoteasterone (6-deoxoTE) to teasterone (TE), 3-dehydro-6-deoxoteasterone (6-deoxo3DT, 6-deoxo-3-DHT) to 3-dehydroteasterone (3DT, 3-DHT), 6-deoxotyphasterol (6-deoxoTY) to typhasterol (TY) and of 6-deoxocastasterone (6-deoxoCS) to castasterone (CS). The sequence is that of Cytochrome P450 85A1 from Brachypodium distachyon (Purple false brome).